The chain runs to 442 residues: Putative zinc metalloprotease PM1991 (442 aa).

His21 is a binding site for Zn(2+). The active site involves Glu22. Residue His25 coordinates Zn(2+). The helical transmembrane segment at 97-119 threads the bilayer; the sequence is AFVIAAGPIANFLFAILAYFTIY. One can recognise a PDZ domain in the interval 198-286; the sequence is DWRFDPEKES…FSFVVLTPEL (89 aa). A run of 2 helical transmembrane segments spans residues 366 to 388 and 418 to 440; these read IGLI…MNLF and LSYR…NDFL.

The protein belongs to the peptidase M50B family. Zn(2+) is required as a cofactor.

The protein resides in the cell inner membrane. This chain is Putative zinc metalloprotease PM1991, found in Pasteurella multocida (strain Pm70).